The following is a 414-amino-acid chain: MSSTVTTAHTAGTGSTVITNIAGLVTNSPSFGRGSPRSSKFESGGASPLGLIQDAAVVIDGDRVAWIGESSKAPATDNRVDAGGRAVIPGFVDSHSHLVFAGDRTQEFNARMSGRSYTAGGIRTTVAATRAASDADLEANLTRYLDEALRQGTTTFETKSGYGLTVEDEARALRIASAHTDEVTYLGAHIVPPDYADDPAAYVALVTGEMLDACAPHARWIDVFCEKGAFDGDQARAILTAGRAKGLHPRVHANQLSYGPGVQLAVELDAASADHCTHLTDADVDALASGRTVATLLPGAEFSTRAEWPNARRLLDAGATVALSTDCNPGSSFTSSVPFCIALAVRDMGMTPDEALWSATAGGAAALRREDIGHLTPGAYADLAFLDAPSHVHLAYRPGVPLVSEVWRRGRRVR.

Histidine 95 and histidine 97 together coordinate Fe(3+). Positions 95 and 97 each coordinate Zn(2+). Positions 104, 162, and 189 each coordinate 4-imidazolone-5-propanoate. Residue tyrosine 162 coordinates N-formimidoyl-L-glutamate. Position 252 (histidine 252) interacts with Fe(3+). Residue histidine 252 participates in Zn(2+) binding. Glutamine 255 serves as a coordination point for 4-imidazolone-5-propanoate. Aspartate 326 is a binding site for Fe(3+). Aspartate 326 serves as a coordination point for Zn(2+). 2 residues coordinate N-formimidoyl-L-glutamate: asparagine 328 and glycine 330. Serine 331 contacts 4-imidazolone-5-propanoate.

Belongs to the metallo-dependent hydrolases superfamily. HutI family. Zn(2+) serves as cofactor. Requires Fe(3+) as cofactor.

The protein localises to the cytoplasm. The enzyme catalyses 4-imidazolone-5-propanoate + H2O = N-formimidoyl-L-glutamate. The protein operates within amino-acid degradation; L-histidine degradation into L-glutamate; N-formimidoyl-L-glutamate from L-histidine: step 3/3. Its function is as follows. Catalyzes the hydrolytic cleavage of the carbon-nitrogen bond in imidazolone-5-propanoate to yield N-formimidoyl-L-glutamate. It is the third step in the universal histidine degradation pathway. This is Imidazolonepropionase from Streptomyces avermitilis (strain ATCC 31267 / DSM 46492 / JCM 5070 / NBRC 14893 / NCIMB 12804 / NRRL 8165 / MA-4680).